The chain runs to 89 residues: Pyrin domain-containing protein 1 (89 aa).

A Pyrin domain is found at 1-89 (MGTKREAILK…EEAARLQRAA (89 aa)).

Interacts with PYCARD/ASC (via pyrin domain). In terms of processing, phosphorylated. Predominantly expressed in monocytes, macrophages and granulocytes.

It is found in the cytoplasm. Associates with PYCARD/ASC and modulates its ability to collaborate with MEFV/pyrin and NLRP3/cryopyrin in NF-kappa-B and pro-caspase-1 activation. Suppresses kinase activity of NF-kappa-B inhibitor kinase (IKK) complex, expression of NF-kappa-B inducible genes and inhibits NF-kappa-B activation by cytokines and LPS. The protein is Pyrin domain-containing protein 1 of Homo sapiens (Human).